Consider the following 930-residue polypeptide: Isoleucine--tRNA ligase (930 aa).

A 'HIGH' region motif is present at residues P57–H67. E554 is a binding site for L-isoleucyl-5'-AMP. Positions K595–S599 match the 'KMSKS' region motif. K598 serves as a coordination point for ATP. C888, C891, C908, and C911 together coordinate Zn(2+).

The protein belongs to the class-I aminoacyl-tRNA synthetase family. IleS type 1 subfamily. As to quaternary structure, monomer. The cofactor is Zn(2+).

The protein localises to the cytoplasm. It carries out the reaction tRNA(Ile) + L-isoleucine + ATP = L-isoleucyl-tRNA(Ile) + AMP + diphosphate. Functionally, catalyzes the attachment of isoleucine to tRNA(Ile). As IleRS can inadvertently accommodate and process structurally similar amino acids such as valine, to avoid such errors it has two additional distinct tRNA(Ile)-dependent editing activities. One activity is designated as 'pretransfer' editing and involves the hydrolysis of activated Val-AMP. The other activity is designated 'posttransfer' editing and involves deacylation of mischarged Val-tRNA(Ile). This Streptococcus pneumoniae (strain ATCC BAA-255 / R6) protein is Isoleucine--tRNA ligase.